The chain runs to 55 residues: Sec-independent protein translocase protein TatA (55 aa).

Residues 1-21 (MGMSFSHLLIVLLIIFVLFGA) traverse the membrane as a helical segment.

Belongs to the TatA/E family. In terms of assembly, the Tat system comprises two distinct complexes: a TatABC complex, containing multiple copies of TatA, TatB and TatC subunits, and a separate TatA complex, containing only TatA subunits. Substrates initially bind to the TatABC complex, which probably triggers association of the separate TatA complex to form the active translocon.

The protein resides in the cell inner membrane. Its function is as follows. Part of the twin-arginine translocation (Tat) system that transports large folded proteins containing a characteristic twin-arginine motif in their signal peptide across membranes. TatA could form the protein-conducting channel of the Tat system. The protein is Sec-independent protein translocase protein TatA of Rickettsia peacockii (strain Rustic).